The chain runs to 78 residues: Esculentin-2Vb (78 aa).

Residues 1-22 form the signal peptide; it reads MFTMKKSLLLLFFLGTISLSLC. Residues 23 to 39 constitute a propeptide that is removed on maturation; sequence EEERGADEEEGDGEKLM. Cys72 and Cys78 form a disulfide bridge.

In terms of tissue distribution, expressed by the skin glands.

The protein resides in the secreted. Functionally, antimicrobial peptide. The protein is Esculentin-2Vb of Odorrana versabilis (Chinese bamboo leaf odorous frog).